Here is a 470-residue protein sequence, read N- to C-terminus: Glycolate oxidase subunit GlcD (470 aa).

The FAD-binding PCMH-type domain maps to Tyr37–Lys216.

The protein belongs to the FAD-binding oxidoreductase/transferase type 4 family. As to quaternary structure, the glycolate oxidase likely consists of several subunits including GlcD and GlcF. FAD is required as a cofactor.

The protein resides in the cell membrane. It catalyses the reaction glycolate + A = glyoxylate + AH2. It carries out the reaction (R)-lactate + A = pyruvate + AH2. Component of a complex that catalyzes the oxidation of glycolate to glyoxylate. Is also able to oxidize D-lactate ((R)-lactate). Does not link directly to O(2), and 2,6-dichloroindophenol (DCIP) and phenazine methosulfate (PMS) can act as artificial electron acceptors in vitro, but the physiological molecule that functions as primary electron acceptor during glycolate oxidation is unknown. The chain is Glycolate oxidase subunit GlcD (glcD) from Bacillus subtilis (strain 168).